The chain runs to 89 residues: Small ribosomal subunit protein uS15 (89 aa).

Belongs to the universal ribosomal protein uS15 family. As to quaternary structure, part of the 30S ribosomal subunit. Forms a bridge to the 50S subunit in the 70S ribosome, contacting the 23S rRNA.

Functionally, one of the primary rRNA binding proteins, it binds directly to 16S rRNA where it helps nucleate assembly of the platform of the 30S subunit by binding and bridging several RNA helices of the 16S rRNA. Forms an intersubunit bridge (bridge B4) with the 23S rRNA of the 50S subunit in the ribosome. This chain is Small ribosomal subunit protein uS15, found in Aeromonas hydrophila subsp. hydrophila (strain ATCC 7966 / DSM 30187 / BCRC 13018 / CCUG 14551 / JCM 1027 / KCTC 2358 / NCIMB 9240 / NCTC 8049).